Reading from the N-terminus, the 502-residue chain is Glycerol kinase (502 aa).

Residue Thr-14 coordinates ADP. Positions 14, 15, and 16 each coordinate ATP. Thr-14 contacts sn-glycerol 3-phosphate. Residue Arg-18 coordinates ADP. Residues Arg-84, Glu-85, and Tyr-136 each contribute to the sn-glycerol 3-phosphate site. The glycerol site is built by Arg-84, Glu-85, and Tyr-136. A Phosphohistidine; by HPr modification is found at His-232. Asp-246 is a binding site for sn-glycerol 3-phosphate. Positions 246 and 247 each coordinate glycerol. The ADP site is built by Thr-268 and Gly-311. Positions 268, 311, 315, and 412 each coordinate ATP. 2 residues coordinate ADP: Gly-412 and Asn-416.

The protein belongs to the FGGY kinase family. In terms of assembly, homotetramer and homodimer (in equilibrium). The phosphoenolpyruvate-dependent sugar phosphotransferase system (PTS), including enzyme I, and histidine-containing protein (HPr) are required for the phosphorylation, which leads to the activation of the enzyme.

It carries out the reaction glycerol + ATP = sn-glycerol 3-phosphate + ADP + H(+). It functions in the pathway polyol metabolism; glycerol degradation via glycerol kinase pathway; sn-glycerol 3-phosphate from glycerol: step 1/1. Activated by phosphorylation and inhibited by fructose 1,6-bisphosphate (FBP). Key enzyme in the regulation of glycerol uptake and metabolism. Catalyzes the phosphorylation of glycerol to yield sn-glycerol 3-phosphate. This chain is Glycerol kinase, found in Streptococcus pneumoniae (strain Hungary19A-6).